Here is a 541-residue protein sequence, read N- to C-terminus: Tripeptidyl aminopeptidase (541 aa).

Residues 1–36 (MRKSSIRRRATAFGTAGALVTATLIAGAVSAPAASA) form the signal peptide. The propeptide occupies 37-39 (APA). The AB hydrolase-1 domain occupies 123–501 (GALIYNPGGP…SRLITERDAG (379 aa)). S249 functions as the Nucleophile in the catalytic mechanism. The active site involves D474. H503 functions as the Proton donor in the catalytic mechanism.

This sequence belongs to the peptidase S33 family.

It localises to the secreted. Cleaves tripeptides from the N-termini of proteins. Does not cleave mono- or dipeptides, or N-terminally blocked peptides. In Streptomyces coelicolor (strain ATCC BAA-471 / A3(2) / M145), this protein is Tripeptidyl aminopeptidase.